The primary structure comprises 262 residues: Glutamate racemase (262 aa).

Substrate is bound by residues 5 to 6 (DS) and 37 to 38 (YG). Residue Cys-69 is the Proton donor/acceptor of the active site. Substrate is bound at residue 70–71 (NT). Cys-181 acts as the Proton donor/acceptor in catalysis. Residue 182–183 (TH) coordinates substrate.

It belongs to the aspartate/glutamate racemases family.

The catalysed reaction is L-glutamate = D-glutamate. Its pathway is cell wall biogenesis; peptidoglycan biosynthesis. In terms of biological role, provides the (R)-glutamate required for cell wall biosynthesis. This is Glutamate racemase from Buchnera aphidicola subsp. Acyrthosiphon pisum (strain APS) (Acyrthosiphon pisum symbiotic bacterium).